The following is a 191-amino-acid chain: Putative zinc metalloprotease MJ0611 (191 aa).

The helical transmembrane segment at 20–40 (AIAFIFSYPNFSILVFIISLI) threads the bilayer. Residue His49 coordinates Zn(2+). The active site involves Glu50. His53 contributes to the Zn(2+) binding site. The next 4 membrane-spanning stretches (helical) occupy residues 73-93 (LILG…PGAV), 110-130 (LAGP…MLIF), 133-153 (GSLL…LAGF), and 171-191 (PFIW…MMFW).

This sequence belongs to the peptidase M50B family. It depends on Zn(2+) as a cofactor.

The protein localises to the cell membrane. The chain is Putative zinc metalloprotease MJ0611 from Methanocaldococcus jannaschii (strain ATCC 43067 / DSM 2661 / JAL-1 / JCM 10045 / NBRC 100440) (Methanococcus jannaschii).